The sequence spans 473 residues: Aspartyl/glutamyl-tRNA(Asn/Gln) amidotransferase subunit B (473 aa).

It belongs to the GatB/GatE family. GatB subfamily. Heterotrimer of A, B and C subunits.

The catalysed reaction is L-glutamyl-tRNA(Gln) + L-glutamine + ATP + H2O = L-glutaminyl-tRNA(Gln) + L-glutamate + ADP + phosphate + H(+). The enzyme catalyses L-aspartyl-tRNA(Asn) + L-glutamine + ATP + H2O = L-asparaginyl-tRNA(Asn) + L-glutamate + ADP + phosphate + 2 H(+). In terms of biological role, allows the formation of correctly charged Asn-tRNA(Asn) or Gln-tRNA(Gln) through the transamidation of misacylated Asp-tRNA(Asn) or Glu-tRNA(Gln) in organisms which lack either or both of asparaginyl-tRNA or glutaminyl-tRNA synthetases. The reaction takes place in the presence of glutamine and ATP through an activated phospho-Asp-tRNA(Asn) or phospho-Glu-tRNA(Gln). The sequence is that of Aspartyl/glutamyl-tRNA(Asn/Gln) amidotransferase subunit B from Wolbachia pipientis subsp. Culex pipiens (strain wPip).